Consider the following 678-residue polypeptide: UvrABC system protein B (678 aa).

Positions 31–417 (EGLENGLAHQ…KSGGEIIDQV (387 aa)) constitute a Helicase ATP-binding domain. Residue 44–51 (GVTGSGKT) participates in ATP binding. Residues 97-120 (YYDYYQPEAYVPSSDTFIEKDASI) carry the Beta-hairpin motif. The Helicase C-terminal domain occupies 436 to 589 (QVDDLLSEAR…QMKYNEARGI (154 aa)). Residues 638 to 673 (QQQIKKLEQQMYKYAQDLEFEKAAAVRDQLQQLREH) enclose the UVR domain.

Belongs to the UvrB family. In terms of assembly, forms a heterotetramer with UvrA during the search for lesions. Interacts with UvrC in an incision complex.

It is found in the cytoplasm. The UvrABC repair system catalyzes the recognition and processing of DNA lesions. A damage recognition complex composed of 2 UvrA and 2 UvrB subunits scans DNA for abnormalities. Upon binding of the UvrA(2)B(2) complex to a putative damaged site, the DNA wraps around one UvrB monomer. DNA wrap is dependent on ATP binding by UvrB and probably causes local melting of the DNA helix, facilitating insertion of UvrB beta-hairpin between the DNA strands. Then UvrB probes one DNA strand for the presence of a lesion. If a lesion is found the UvrA subunits dissociate and the UvrB-DNA preincision complex is formed. This complex is subsequently bound by UvrC and the second UvrB is released. If no lesion is found, the DNA wraps around the other UvrB subunit that will check the other stand for damage. The polypeptide is UvrABC system protein B (Pasteurella multocida (strain Pm70)).